Here is a 1012-residue protein sequence, read N- to C-terminus: Probable inorganic carbon transporter subunit DabA (1012 aa).

C489, D491, H679, and C694 together coordinate Zn(2+).

The protein belongs to the inorganic carbon transporter (TC 9.A.2) DabA family. In terms of assembly, forms a complex with DabB. The cofactor is Zn(2+).

It is found in the cell inner membrane. Functionally, part of an energy-coupled inorganic carbon pump. The chain is Probable inorganic carbon transporter subunit DabA from Dechloromonas aromatica (strain RCB).